The following is a 154-amino-acid chain: 17.6 kDa class I heat shock protein (154 aa).

The region spanning 40-154 is the sHSP domain; that stretch reads ETSAFANTRI…PDVKSIEISG (115 aa).

Belongs to the small heat shock protein (HSP20) family. In terms of assembly, forms oligomeric structures.

It is found in the cytoplasm. The chain is 17.6 kDa class I heat shock protein from Solanum peruvianum (Peruvian tomato).